The sequence spans 718 residues: Polyribonucleotide nucleotidyltransferase (718 aa).

2 residues coordinate Mg(2+): D493 and D499. One can recognise a KH domain in the interval 560-619 (PRMITIKINPEKIRDVIGKGGSVIRALTEETGTTIDISDDGVVTIASTSSEGMAEAKKRI). In terms of domain architecture, S1 motif spans 629-697 (GQVYEGTVLK…EKGRVRLSAK (69 aa)).

This sequence belongs to the polyribonucleotide nucleotidyltransferase family. Mg(2+) is required as a cofactor.

The protein localises to the cytoplasm. The catalysed reaction is RNA(n+1) + phosphate = RNA(n) + a ribonucleoside 5'-diphosphate. In terms of biological role, involved in mRNA degradation. Catalyzes the phosphorolysis of single-stranded polyribonucleotides processively in the 3'- to 5'-direction. The sequence is that of Polyribonucleotide nucleotidyltransferase from Paraburkholderia phytofirmans (strain DSM 17436 / LMG 22146 / PsJN) (Burkholderia phytofirmans).